A 199-amino-acid polypeptide reads, in one-letter code: ATP-dependent Clp protease proteolytic subunit (199 aa).

Residues 1-23 (MTTSAARKGLRTRGSACPRATRS) are disordered. The active-site Nucleophile is Ser100. His125 is an active-site residue.

It belongs to the peptidase S14 family. As to quaternary structure, fourteen ClpP subunits assemble into 2 heptameric rings which stack back to back to give a disk-like structure with a central cavity, resembling the structure of eukaryotic proteasomes.

It localises to the cytoplasm. It carries out the reaction Hydrolysis of proteins to small peptides in the presence of ATP and magnesium. alpha-casein is the usual test substrate. In the absence of ATP, only oligopeptides shorter than five residues are hydrolyzed (such as succinyl-Leu-Tyr-|-NHMec, and Leu-Tyr-Leu-|-Tyr-Trp, in which cleavage of the -Tyr-|-Leu- and -Tyr-|-Trp bonds also occurs).. Functionally, cleaves peptides in various proteins in a process that requires ATP hydrolysis. Has a chymotrypsin-like activity. Plays a major role in the degradation of misfolded proteins. This chain is ATP-dependent Clp protease proteolytic subunit, found in Paracoccus denitrificans.